The sequence spans 272 residues: GATA zinc finger domain-containing protein 1 (272 aa).

The segment at 9–33 (CSVCKTTSSSMWKKGPQGEILCHHC) adopts a GATA-type zinc-finger fold. A disordered region spans residues 67 to 120 (TFASTSAAPPQSNGGGGGKQSKQEIHRRSARLRNTKYKSAPAAEKKVSTKGKGR). Lys-167 bears the N6-acetyllysine mark. Lys-265 participates in a covalent cross-link: Glycyl lysine isopeptide (Lys-Gly) (interchain with G-Cter in SUMO2).

The protein resides in the nucleus. This is GATA zinc finger domain-containing protein 1 (GATAD1) from Bos taurus (Bovine).